Consider the following 89-residue polypeptide: DNA/RNA-binding protein Alba (89 aa).

N6-acetyllysine is present on lysine 11.

This sequence belongs to the histone-like Alba family. Post-translationally, acetylated. Acetylation at Lys-11 decreases DNA-binding affinity.

Its subcellular location is the cytoplasm. The protein localises to the chromosome. Functionally, binds double-stranded DNA tightly but without sequence specificity. Involved in DNA compaction. The sequence is that of DNA/RNA-binding protein Alba from Thermoplasma acidophilum (strain ATCC 25905 / DSM 1728 / JCM 9062 / NBRC 15155 / AMRC-C165).